A 208-amino-acid polypeptide reads, in one-letter code: Uracil phosphoribosyltransferase (208 aa).

5-phospho-alpha-D-ribose 1-diphosphate-binding positions include Arg-78, Arg-103, and 130-138 (DPMLATGGS). Residues Ile-193 and 198 to 200 (GDA) each bind uracil. Asp-199 serves as a coordination point for 5-phospho-alpha-D-ribose 1-diphosphate.

The protein belongs to the UPRTase family. Mg(2+) serves as cofactor.

The catalysed reaction is UMP + diphosphate = 5-phospho-alpha-D-ribose 1-diphosphate + uracil. Its pathway is pyrimidine metabolism; UMP biosynthesis via salvage pathway; UMP from uracil: step 1/1. Allosterically activated by GTP. Functionally, catalyzes the conversion of uracil and 5-phospho-alpha-D-ribose 1-diphosphate (PRPP) to UMP and diphosphate. The sequence is that of Uracil phosphoribosyltransferase from Escherichia fergusonii (strain ATCC 35469 / DSM 13698 / CCUG 18766 / IAM 14443 / JCM 21226 / LMG 7866 / NBRC 102419 / NCTC 12128 / CDC 0568-73).